Here is a 220-residue protein sequence, read N- to C-terminus: Protein LURP-one-related 12 (220 aa).

The protein belongs to the LOR family.

Its function is as follows. Might be related to the phospholipid scramblase and tubby-like superfamily of membrane tethered transcription factors. This Arabidopsis thaliana (Mouse-ear cress) protein is Protein LURP-one-related 12.